Here is a 467-residue protein sequence, read N- to C-terminus: 3-isopropylmalate dehydratase large subunit (467 aa).

Residues cysteine 347, cysteine 407, and cysteine 410 each coordinate [4Fe-4S] cluster.

The protein belongs to the aconitase/IPM isomerase family. LeuC type 1 subfamily. Heterodimer of LeuC and LeuD. The cofactor is [4Fe-4S] cluster.

It catalyses the reaction (2R,3S)-3-isopropylmalate = (2S)-2-isopropylmalate. It participates in amino-acid biosynthesis; L-leucine biosynthesis; L-leucine from 3-methyl-2-oxobutanoate: step 2/4. In terms of biological role, catalyzes the isomerization between 2-isopropylmalate and 3-isopropylmalate, via the formation of 2-isopropylmaleate. The sequence is that of 3-isopropylmalate dehydratase large subunit from Gloeothece citriformis (strain PCC 7424) (Cyanothece sp. (strain PCC 7424)).